The sequence spans 333 residues: Eukaryotic translation initiation factor 2 subunit 2 (333 aa).

Disordered regions lie at residues methionine 1–isoleucine 119 and isoleucine 139–glycine 164. Serine 2 is modified (N-acetylserine). Phosphoserine occurs at positions 2 and 13. Residues serine 13–proline 22 show a composition bias toward basic residues. Phosphothreonine occurs at positions 31 and 36. Basic and acidic residues predominate over residues glutamate 40–aspartate 51. The residue at position 67 (serine 67) is a Phosphoserine. Basic and acidic residues predominate over residues glutamate 96–serine 105. Lysine 102 is covalently cross-linked (Glycyl lysine isopeptide (Lys-Gly) (interchain with G-Cter in SUMO2)). Serine 105 carries the phosphoserine modification. Composition is skewed to acidic residues over residues aspartate 106 to aspartate 118 and isoleucine 139 to glutamate 149. Threonine 111 carries the phosphothreonine modification. Residues serine 158 and serine 218 each carry the phosphoserine modification. Lysine 265 and lysine 293 each carry N6-acetyllysine. The C4-type zinc-finger motif lies at cysteine 281–cysteine 305.

It belongs to the eIF-2-beta/eIF-5 family. In terms of assembly, eukaryotic translation initiation factor 2 eIF2 is a heterotrimeric complex composed of an alpha (EIF2S1), a beta (EIF2S2) and a gamma (EIF2S3) chain. eIF2 is member of the 43S pre-initiation complex (43S PIC). eIF2 forms a complex with at least CELF1/CUGBP1, CALR, CALR3, EIF2S1, EIF2S2, HSP90B1 and HSPA5. Interacts with BZW2/5MP1. Interacts with EIF5.

The protein localises to the cytoplasm. The protein resides in the cytosol. Its function is as follows. Component of the eIF2 complex that functions in the early steps of protein synthesis by forming a ternary complex with GTP and initiator tRNA. This complex binds to a 40S ribosomal subunit, followed by mRNA binding to form the 43S pre-initiation complex (43S PIC). Junction of the 60S ribosomal subunit to form the 80S initiation complex is preceded by hydrolysis of the GTP bound to eIF2 and release of an eIF2-GDP binary complex. In order for eIF2 to recycle and catalyze another round of initiation, the GDP bound to eIF2 must exchange with GTP by way of a reaction catalyzed by eIF2B. This is Eukaryotic translation initiation factor 2 subunit 2 (EIF2S2) from Pongo abelii (Sumatran orangutan).